Consider the following 441-residue polypeptide: MSIDIDWERATSGPDGELLAERIRSFIHDKFQQMVLPRFIRSVQVTSFNFGTIPPELEIRDLTDPFPDFYEDGDEDLSVSSEEQSPMREQADRYRERIDSWQTNSPGSLEGQMSGRMGFGHPLQLAPDEDGSRLHPLRSPINLGDINPYLFPRSGTPGIPGGTSNLGYFMPLSGLSGSQVPLRAVTRGNPFSGGWPDSPLENEKRIGHGQGPPRRRSEVDVDAIQSRPSTANTGNTLLSRGSVSTGDPRHSHPSQTLLANNPGQVPDANDSPVSAVPPLSGTPPRRMREQKAEDFQVFCRTKYAGNISLSLTAEILLDYPMPSFVGLPLKLNITGLTFDAVAVLAYIRRRIHFCFLSPEDADALIGPETGAGGGDTMEPNSLRRKNLSLLRKIRVESEIGRKENGKQALKNVGKVEKFVLEQVRRIFEEEFVYPSFWTFLV.

The region spanning 1–441 (MSIDIDWERA…VYPSFWTFLV (441 aa)) is the SMP-LTD domain. Disordered regions lie at residues 68 to 89 (DFYE…PMRE) and 183 to 289 (RAVT…RMRE). Polar residues-rich tracts occupy residues 226–245 (SRPS…SVST) and 253–263 (PSQTLLANNPG).

The protein belongs to the MDM12 family. In terms of assembly, component of the ER-mitochondria encounter structure (ERMES) or MDM complex, composed of MMM1, MDM10, MDM12 and MDM34. An MMM1 homodimer associates with one molecule of MDM12 on each side in a pairwise head-to-tail manner, and the SMP-LTD domains of MMM1 and MDM12 generate a continuous hydrophobic tunnel for phospholipid trafficking.

The protein resides in the mitochondrion outer membrane. It is found in the endoplasmic reticulum membrane. Component of the ERMES/MDM complex, which serves as a molecular tether to connect the endoplasmic reticulum (ER) and mitochondria. Components of this complex are involved in the control of mitochondrial shape and protein biogenesis, and function in nonvesicular lipid trafficking between the ER and mitochondria. MDM12 is required for the interaction of the ER-resident membrane protein MMM1 and the outer mitochondrial membrane-resident beta-barrel protein MDM10. The MDM12-MMM1 subcomplex functions in the major beta-barrel assembly pathway that is responsible for biogenesis of all mitochondrial outer membrane beta-barrel proteins, and acts in a late step after the SAM complex. The MDM10-MDM12-MMM1 subcomplex further acts in the TOM40-specific pathway after the action of the MDM12-MMM1 complex. Essential for establishing and maintaining the structure of mitochondria and maintenance of mtDNA nucleoids. This Paracoccidioides lutzii (strain ATCC MYA-826 / Pb01) (Paracoccidioides brasiliensis) protein is Mitochondrial distribution and morphology protein 12.